We begin with the raw amino-acid sequence, 312 residues long: Putative endonuclease 4 (312 aa).

The Zn(2+) site is built by histidine 84, histidine 127, glutamate 166, aspartate 202, histidine 205, histidine 239, aspartate 252, histidine 254, and glutamate 284.

Belongs to the AP endonuclease 2 family. The cofactor is Zn(2+).

It catalyses the reaction Endonucleolytic cleavage to 5'-phosphooligonucleotide end-products.. Its function is as follows. Endonuclease IV plays a role in DNA repair. It cleaves phosphodiester bonds at apurinic or apyrimidinic sites (AP sites) to produce new 5'-ends that are base-free deoxyribose 5-phosphate residues. In Acanthamoeba polyphaga (Amoeba), this protein is Putative endonuclease 4.